The following is a 198-amino-acid chain: MADTGQSDRKERSNGVIVGTCLAFVVGMVGMAYAAVPLYDMFCRVTGYNGTTQRVEQESDLILDEKVKVTFDANVAAGLPWEFAPVQRDIDVRIGETVQITYRARNLASTPTTGQATFNVTPMAAGAYFNKVQCFCFTETTLQPGEEMEMPVVFFVDPEIVKTVETKGIKTLTLSYTFYPREPSKPVAQVKSRTENKL.

The Cytoplasmic portion of the chain corresponds to 1–12 (MADTGQSDRKER). Residues 13–35 (SNGVIVGTCLAFVVGMVGMAYAA) traverse the membrane as a helical; Signal-anchor for type II membrane protein segment. The Periplasmic segment spans residues 36–198 (VPLYDMFCRV…QVKSRTENKL (163 aa)).

It belongs to the COX11/CtaG family.

The protein resides in the cell inner membrane. Its function is as follows. Exerts its effect at some terminal stage of cytochrome c oxidase synthesis, probably by being involved in the insertion of the copper B into subunit I. The protein is Cytochrome c oxidase assembly protein CtaG of Sinorhizobium medicae (strain WSM419) (Ensifer medicae).